The primary structure comprises 333 residues: MRIWWLLLAIEICTGNINSQDTCRQGHPGIPGNPGHNGLPGRDGRDGAKGDKGDAGEPGCPGSPGKDGTSGEKGERGADGKVEAKGIKGDQGSRGSPGKHGPKGLAGPMGEKGLRGETGPQGQKGNKGDVGPTGPEGPRGNIGPLGPTGLPGPMGPIGKPGPKGEAGPTGPQGEPGVRGIRGWKGDRGEKGKIGETLVLPKSAFTVGLTVLSKFPSSDVPIKFDKILYNEFNHYDTAVGKFTCHIAGVYYFTYHITVFSRNVQVSLVKNGVKILHTRDAYVSSEDQASGSIVLQLKLGDEMWLQVTGGERFNGLFADEDDDTTFTGFLLFSSQ.

A signal peptide spans 1–19 (MRIWWLLLAIEICTGNINS). 3 consecutive Collagen-like domains span residues 24–82 (RQGH…DGKV), 95–154 (GSPG…PGPM), and 155–191 (GPIG…GEKG). The disordered stretch occupies residues 24–189 (RQGHPGIPGN…IRGWKGDRGE (166 aa)). Residues 26-40 (GHPGIPGNPGHNGLP) are compositionally biased toward low complexity. 2 stretches are compositionally biased toward basic and acidic residues: residues 42 to 55 (RDGR…KGDA) and 69 to 88 (TSGE…KGIK). The C1q domain maps to 197 to 333 (LVLPKSAFTV…FTGFLLFSSQ (137 aa)).

As to quaternary structure, interacts with CTRP9A and ADIPOQ. Forms heterotrimers and heterooligomeric complexes with CTRP9A. As to expression, expressed at low levels. Not expressed in adipose tissues.

The protein localises to the secreted. Probable adipokine. Activates AMPK, AKT, and p44/42 MAPK signaling pathways. The chain is Complement C1q and tumor necrosis factor-related protein 9B (C1QTNF9B) from Homo sapiens (Human).